Reading from the N-terminus, the 154-residue chain is Transcriptional repressor NrdR (154 aa).

A zinc finger spans residues 3 to 34 (CPFCGANDTKVIDSRLVAEGEQVRRRRECLAC). Residues 49-139 (PRLIKQDGSR…VYRRFQDLNE (91 aa)) enclose the ATP-cone domain.

The protein belongs to the NrdR family. Zn(2+) is required as a cofactor.

Negatively regulates transcription of bacterial ribonucleotide reductase nrd genes and operons by binding to NrdR-boxes. The chain is Transcriptional repressor NrdR from Pseudomonas syringae pv. syringae (strain B728a).